Reading from the N-terminus, the 375-residue chain is 23S rRNA (uracil(747)-C(5))-methyltransferase RlmC (375 aa).

The [4Fe-4S] cluster site is built by Cys-3, Cys-11, Cys-14, and Cys-87. Gln-212, Phe-241, Glu-262, and Asn-307 together coordinate S-adenosyl-L-methionine. Cys-334 (nucleophile) is an active-site residue.

The protein belongs to the class I-like SAM-binding methyltransferase superfamily. RNA M5U methyltransferase family. RlmC subfamily.

The enzyme catalyses uridine(747) in 23S rRNA + S-adenosyl-L-methionine = 5-methyluridine(747) in 23S rRNA + S-adenosyl-L-homocysteine + H(+). In terms of biological role, catalyzes the formation of 5-methyl-uridine at position 747 (m5U747) in 23S rRNA. In Escherichia coli O139:H28 (strain E24377A / ETEC), this protein is 23S rRNA (uracil(747)-C(5))-methyltransferase RlmC.